The following is a 373-amino-acid chain: Anhydro-N-acetylmuramic acid kinase (373 aa).

Position 12–19 (12–19) interacts with ATP; it reads GTSLDGVD.

Belongs to the anhydro-N-acetylmuramic acid kinase family.

It carries out the reaction 1,6-anhydro-N-acetyl-beta-muramate + ATP + H2O = N-acetyl-D-muramate 6-phosphate + ADP + H(+). Its pathway is amino-sugar metabolism; 1,6-anhydro-N-acetylmuramate degradation. The protein operates within cell wall biogenesis; peptidoglycan recycling. Its function is as follows. Catalyzes the specific phosphorylation of 1,6-anhydro-N-acetylmuramic acid (anhMurNAc) with the simultaneous cleavage of the 1,6-anhydro ring, generating MurNAc-6-P. Is required for the utilization of anhMurNAc either imported from the medium or derived from its own cell wall murein, and thus plays a role in cell wall recycling. This is Anhydro-N-acetylmuramic acid kinase from Erwinia tasmaniensis (strain DSM 17950 / CFBP 7177 / CIP 109463 / NCPPB 4357 / Et1/99).